Reading from the N-terminus, the 252-residue chain is U2 small nuclear ribonucleoprotein A' (252 aa).

LRR repeat units follow at residues 41-62 (PHDA…PLSP), 63-84 (RIRT…LPNA), and 87-108 (NLKN…EVLG). The LRRCT domain occupies 121–159 (NPVTKKENYRYWVLWLCPQVRFLDYVKVKDAERQKAKEL).

Belongs to the U2 small nuclear ribonucleoprotein A family. As to quaternary structure, associated with the spliceosome.

The protein localises to the nucleus. In terms of biological role, involved in pre-mRNA splicing. The protein is U2 small nuclear ribonucleoprotein A' (lea-1) of Neurospora crassa (strain ATCC 24698 / 74-OR23-1A / CBS 708.71 / DSM 1257 / FGSC 987).